The following is a 277-amino-acid chain: Inositol monophosphatase 1 (277 aa).

Residues Glu70, Asp90, Ile92, and Asp93 each contribute to the Mg(2+) site. Glu70 contacts substrate. Substrate is bound at residue 92 to 95; it reads IDGT. Thr168 bears the Phosphothreonine mark. Residues 194 to 196, Glu213, and Asp220 contribute to the substrate site; that span reads GTA. Asp220 is a Mg(2+) binding site.

The protein belongs to the inositol monophosphatase superfamily. As to quaternary structure, homodimer. It depends on Mg(2+) as a cofactor.

It is found in the cytoplasm. It carries out the reaction a myo-inositol phosphate + H2O = myo-inositol + phosphate. It catalyses the reaction 1D-myo-inositol 1-phosphate + H2O = myo-inositol + phosphate. The enzyme catalyses 1D-myo-inositol 2-phosphate + H2O = myo-inositol + phosphate. The catalysed reaction is 1D-myo-inositol 3-phosphate + H2O = myo-inositol + phosphate. It carries out the reaction 1D-myo-inositol 4-phosphate + H2O = myo-inositol + phosphate. It catalyses the reaction 1D-myo-inositol 5-phosphate + H2O = myo-inositol + phosphate. The enzyme catalyses 1D-myo-inositol 6-phosphate + H2O = myo-inositol + phosphate. The catalysed reaction is scyllo-inositol 1-phosphate + H2O = scyllo-inositol + phosphate. It carries out the reaction alpha-D-galactose 1-phosphate + H2O = D-galactose + phosphate. It catalyses the reaction alpha-D-glucose 1-phosphate + H2O = D-glucose + phosphate. The enzyme catalyses D-glucose 6-phosphate + H2O = D-glucose + phosphate. The catalysed reaction is beta-D-fructose 1-phosphate + H2O = D-fructose + phosphate. It carries out the reaction glycerol 2-phosphate + H2O = glycerol + phosphate. It catalyses the reaction adenosine 2'-phosphate + H2O = adenosine + phosphate. It functions in the pathway polyol metabolism; myo-inositol biosynthesis; myo-inositol from D-glucose 6-phosphate: step 2/2. Activity with myo-inositol monophosphates and D-galactose 1-phosphate is inhibited by Li(+), Ca(2+) and Mn(2+), but also by Mg(2+) at concentrations above 3 mM. Functionally, phosphatase involved in the dephosphorylation of myo-inositol monophosphates to generate myo-inositol. Is also able to dephosphorylate scyllo-inositol-phosphate, myo-inositol 1,4-diphosphate, scyllo-inositol-1,3-diphosphate and scyllo-inositol-1,4-diphosphate. Also dephosphorylates in vitro other sugar-phosphates including D-galactose-1-phosphate, glucose-1-phosphate, glucose-6-phosphate, fructose-1-phosphate, beta-glycerophosphate and 2'-AMP. Responsible for the provision of inositol required for synthesis of phosphatidylinositols and polyphosphoinositides, and involved in maintaining normal brain function. Has been implicated as the pharmacological target for lithium (Li(+)) action in brain, which is used to treat bipolar affective disorder. Is equally active with 1D-myo-inositol 1-phosphate, 1D-myo-inositol 3-phosphate and D-galactose 1-phosphate. This is Inositol monophosphatase 1 from Homo sapiens (Human).